Consider the following 235-residue polypeptide: Protein Thf1 (235 aa).

The stretch at 183–204 forms a coiled coil; sequence DKLNKDLELYRSNLDKMAQALV. The segment at 213–235 is disordered; that stretch reads DRKKREQRKQQSTAPVAPPSSNE. A compositionally biased stretch (polar residues) spans 222–235; it reads QQSTAPVAPPSSNE.

It belongs to the THF1 family.

May be involved in photosynthetic membrane biogenesis. This is Protein Thf1 from Nostoc punctiforme (strain ATCC 29133 / PCC 73102).